The chain runs to 372 residues: N-acetylneuraminate-9-phosphate synthase (372 aa).

The AFP-like domain maps to 314-372; the sequence is SIVAARNLNKGYRLQLADMAIKVSEPSGLTAEDFLDLVGKELADNIGEDEPILGNSIIN.

The catalysed reaction is aldehydo-N-acetyl-D-mannosamine 6-phosphate + phosphoenolpyruvate + H2O = N-acetylneuraminate 9-phosphate + phosphate. It carries out the reaction aldehydo-D-mannose 6-phosphate + phosphoenolpyruvate + H2O = 3-deoxy-D-glycero-beta-D-galacto-non-2-ulopyranosonate 9-phosphate + phosphate. Functionally, catalyzes the condensation of phosphoenolpyruvate (PEP) and N-acetylmannosamine 6-phosphate (ManNAc-6-P) or D-mannose 6-phosphate (Man-6-P) to generate the phosphorylated forms of both the sialic acids N-acetylneuraminic acid (Neu5Ac) and deaminoneuraminic acid (KDN), respectively. Essential for biosynthesis of sialic acids in neurons of the central nervous system. This Drosophila melanogaster (Fruit fly) protein is N-acetylneuraminate-9-phosphate synthase.